The chain runs to 333 residues: Phosphate acyltransferase (333 aa).

It belongs to the PlsX family. Homodimer. Probably interacts with PlsY.

The protein localises to the cytoplasm. It catalyses the reaction a fatty acyl-[ACP] + phosphate = an acyl phosphate + holo-[ACP]. It functions in the pathway lipid metabolism; phospholipid metabolism. In terms of biological role, catalyzes the reversible formation of acyl-phosphate (acyl-PO(4)) from acyl-[acyl-carrier-protein] (acyl-ACP). This enzyme utilizes acyl-ACP as fatty acyl donor, but not acyl-CoA. The polypeptide is Phosphate acyltransferase (Desulforamulus reducens (strain ATCC BAA-1160 / DSM 100696 / MI-1) (Desulfotomaculum reducens)).